The primary structure comprises 161 residues: Allophycocyanin beta subunit (161 aa).

Asparagine 71 carries the N4-methylasparagine modification. Cysteine 81 is a (2R,3E)-phycocyanobilin binding site.

The protein belongs to the phycobiliprotein family. Heterodimer of an alpha and a beta chain. In terms of processing, contains one covalently linked phycocyanobilin chromophore. The chromophore is added by the phycocyanobilin lyase CpcUS.

Its subcellular location is the cellular thylakoid membrane. Light-harvesting photosynthetic bile pigment-protein from the phycobiliprotein complex. Allophycocyanin has a maximum absorption at approximately 650 nanometers. The sequence is that of Allophycocyanin beta subunit (apcB) from Picosynechococcus sp. (strain ATCC 27264 / PCC 7002 / PR-6) (Agmenellum quadruplicatum).